Here is a 1074-residue protein sequence, read N- to C-terminus: Chitin synthase 2 (1074 aa).

Disordered stretches follow at residues 1 to 32 (MSHY…AHSG), 56 to 179 (QAAP…PSQH), and 209 to 255 (RSDS…PYNN). Over residues 19-29 (DQQQPYYTDQA) the composition is skewed to polar residues. Over residues 68–80 (RIRSNSSGSRSVS) the composition is skewed to low complexity. N-linked (GlcNAc...) asparagine glycans are attached at residues asparagine 72 and asparagine 97. A compositionally biased stretch (polar residues) spans 85-119 (AYTNQGIPPVPSNLSAARQRSDPSQALPPSSSSYA). The span at 129 to 143 (SSHRNAPNAPNSNHP) shows a compositional bias: low complexity. The N-linked (GlcNAc...) asparagine glycan is linked to asparagine 149. An N-linked (GlcNAc...) asparagine glycan is attached at asparagine 289. 8 helical membrane-spanning segments follow: residues 608–628 (VFGF…KALL), 742–762 (LVLL…FYFL), 779–799 (GAAI…VVLV), 817–837 (IIIF…TIYL), 867–887 (IVIS…LHLE), 891–911 (MLTS…ILSM), 1001–1021 (LVLI…STWW), and 1048–1068 (IFWS…TFLL).

It belongs to the chitin synthase family. Class II subfamily.

It localises to the cell membrane. Its subcellular location is the cytoplasmic vesicle membrane. It catalyses the reaction [(1-&gt;4)-N-acetyl-beta-D-glucosaminyl](n) + UDP-N-acetyl-alpha-D-glucosamine = [(1-&gt;4)-N-acetyl-beta-D-glucosaminyl](n+1) + UDP + H(+). In terms of biological role, polymerizes chitin, a structural polymer of the cell wall and septum, by transferring the sugar moiety of UDP-GlcNAc to the non-reducing end of the growing chitin polymer. The protein is Chitin synthase 2 (CHS2) of Mycosarcoma maydis (Corn smut fungus).